A 680-amino-acid chain; its full sequence is NADPH--cytochrome P450 reductase (680 aa).

Topologically, residues 1 to 5 (MALDK) are lumenal. A helical transmembrane segment spans residues 6–23 (LDLYVIITLVVAIAAYFA). Residues 24–680 (KNQFLDQQQD…VQNRYQEDVW (657 aa)) are Cytoplasmic-facing. Residues 60–204 (TLLLFGSQTG…DFLAWKDNVF (145 aa)) enclose the Flavodoxin-like domain. FMN is bound by residues 66-71 (SQTGTA), 117-120 (ATYG), 152-161 (LGNSTYEFFN), and D187. An FAD-binding FR-type domain is found at 264 to 509 (THPFLARIVK…NGPRGKFSKF (246 aa)). Position 283 (R283) interacts with NADP(+). Residues 439–442 (RYYS), 457–459 (TAV), and 473–476 (GVVT) contribute to the FAD site. Residues T537, 599–600 (SR), 606–610 (KVYVQ), and D642 contribute to the NADP(+) site. W680 is a binding site for FAD.

It belongs to the NADPH--cytochrome P450 reductase family. The protein in the N-terminal section; belongs to the flavodoxin family. This sequence in the C-terminal section; belongs to the flavoprotein pyridine nucleotide cytochrome reductase family. FAD is required as a cofactor. It depends on FMN as a cofactor.

It is found in the endoplasmic reticulum membrane. The protein resides in the mitochondrion outer membrane. Its subcellular location is the cell membrane. It catalyses the reaction 2 oxidized [cytochrome P450] + NADPH = 2 reduced [cytochrome P450] + NADP(+) + H(+). Functionally, this enzyme is required for electron transfer from NADP to cytochrome P450 in microsomes. It can also provide electron transfer to heme oxygenase and cytochrome B5. Involved in ergosterol biosynthesis. The polypeptide is NADPH--cytochrome P450 reductase (Candida tropicalis (Yeast)).